Here is a 129-residue protein sequence, read N- to C-terminus: uncharacterized protein (129 aa).

A disordered region spans residues 1-129 (MWLWQDIQCC…HTSNGRTGDL (129 aa)). Residues 87-100 (KGADTRRLPRETRP) show a composition bias toward basic and acidic residues. Positions 119 to 129 (PHTSNGRTGDL) are enriched in polar residues.

This is an uncharacterized protein from Homo sapiens (Human).